A 241-amino-acid polypeptide reads, in one-letter code: Major prion protein (241 aa).

A signal peptide spans 1–15; that stretch reads MLVLFVATWSDLGLC. Residues 16–31 form an interaction with ADGRG6 region; the sequence is KKRPKPGGWNTGGSRY. An interaction with GRB2, ERI3 and SYN1 region spans residues 16–223; that stretch reads KKRPKPGGWN…ESQAYYQRGS (208 aa). A disordered region spans residues 18–100; the sequence is RPKPGGWNTG…QWNKPSKPKT (83 aa). 5 tandem repeats follow at residues 44 to 52, 53 to 60, 61 to 68, 69 to 76, and 77 to 84. The tract at residues 44–84 is 5 X 8 AA tandem repeats of P-H-G-G-G-W-G-Q; it reads PQGGGSWGQPHGGGWGQPHGGGWGQPHGGGWGQPHGGGWGQ. Positions 45 to 88 are enriched in gly residues; it reads QGGGSWGQPHGGGWGQPHGGGWGQPHGGGWGQPHGGGWGQGGGT. 12 residues coordinate Cu(2+): H54, G55, G56, H62, G63, G64, H70, G71, G72, H78, G79, and G80. C172 and C207 are disulfide-bonded. 2 N-linked (GlcNAc...) asparagine glycosylation sites follow: N174 and N190. Residue S223 is the site of GPI-anchor amidated serine attachment. The propeptide at 224-241 is removed in mature form; sequence SMVLFSSPPVILLISFLI.

Belongs to the prion family. Monomer and homodimer. Has a tendency to aggregate into amyloid fibrils containing a cross-beta spine, formed by a steric zipper of superposed beta-strands. Soluble oligomers may represent an intermediate stage on the path to fibril formation. Copper binding may promote oligomerization. Interacts with GRB2, APP, ERI3/PRNPIP and SYN1. Mislocalized cytosolically exposed PrP interacts with MGRN1; this interaction alters MGRN1 subcellular location and causes lysosomal enlargement. Interacts with APP. Interacts with KIAA1191. Interacts with ADGRG6.

It is found in the cell membrane. The protein localises to the golgi apparatus. Its function is as follows. Its primary physiological function is unclear. May play a role in neuronal development and synaptic plasticity. May be required for neuronal myelin sheath maintenance. May promote myelin homeostasis through acting as an agonist for ADGRG6 receptor. May play a role in iron uptake and iron homeostasis. Soluble oligomers are toxic to cultured neuroblastoma cells and induce apoptosis (in vitro). Association with GPC1 (via its heparan sulfate chains) targets PRNP to lipid rafts. Also provides Cu(2+) or Zn(2+) for the ascorbate-mediated GPC1 deaminase degradation of its heparan sulfate side chains. This is Major prion protein (PRNP) from Plecturocebus moloch (Dusky titi monkey).